The primary structure comprises 244 residues: 5-oxoprolinase subunit A (244 aa).

This sequence belongs to the LamB/PxpA family. As to quaternary structure, forms a complex composed of PxpA, PxpB and PxpC.

It catalyses the reaction 5-oxo-L-proline + ATP + 2 H2O = L-glutamate + ADP + phosphate + H(+). Functionally, catalyzes the cleavage of 5-oxoproline to form L-glutamate coupled to the hydrolysis of ATP to ADP and inorganic phosphate. The protein is 5-oxoprolinase subunit A of Escherichia coli O139:H28 (strain E24377A / ETEC).